Consider the following 424-residue polypeptide: Enolase (424 aa).

Glutamine 162 serves as a coordination point for (2R)-2-phosphoglycerate. The active-site Proton donor is glutamate 204. Residues aspartate 241, glutamate 284, and aspartate 311 each contribute to the Mg(2+) site. Lysine 336, arginine 365, serine 366, and lysine 387 together coordinate (2R)-2-phosphoglycerate. The Proton acceptor role is filled by lysine 336.

Belongs to the enolase family. It depends on Mg(2+) as a cofactor.

Its subcellular location is the cytoplasm. It localises to the secreted. The protein localises to the cell surface. The catalysed reaction is (2R)-2-phosphoglycerate = phosphoenolpyruvate + H2O. It functions in the pathway carbohydrate degradation; glycolysis; pyruvate from D-glyceraldehyde 3-phosphate: step 4/5. Its function is as follows. Catalyzes the reversible conversion of 2-phosphoglycerate (2-PG) into phosphoenolpyruvate (PEP). It is essential for the degradation of carbohydrates via glycolysis. The chain is Enolase from Sinorhizobium fredii (strain NBRC 101917 / NGR234).